The following is a 233-amino-acid chain: tRNA1(Val) (adenine(37)-N6)-methyltransferase (233 aa).

It belongs to the methyltransferase superfamily. tRNA (adenine-N(6)-)-methyltransferase family.

It localises to the cytoplasm. It catalyses the reaction adenosine(37) in tRNA1(Val) + S-adenosyl-L-methionine = N(6)-methyladenosine(37) in tRNA1(Val) + S-adenosyl-L-homocysteine + H(+). In terms of biological role, specifically methylates the adenine in position 37 of tRNA(1)(Val) (anticodon cmo5UAC). This Shewanella amazonensis (strain ATCC BAA-1098 / SB2B) protein is tRNA1(Val) (adenine(37)-N6)-methyltransferase.